A 114-amino-acid chain; its full sequence is T cell receptor beta variable 10-3 (114 aa).

The N-terminal stretch at Met1–Ala21 is a signal peptide. The Ig-like domain maps to Gly22–Glu114. Cys42 and Cys110 are oxidised to a cystine.

As to quaternary structure, alpha-beta TR is a heterodimer composed of an alpha and beta chain; disulfide-linked. The alpha-beta TR is associated with the transmembrane signaling CD3 coreceptor proteins to form the TR-CD3 (TcR or TCR). The assembly of alpha-beta TR heterodimers with CD3 occurs in the endoplasmic reticulum where a single alpha-beta TR heterodimer associates with one CD3D-CD3E heterodimer, one CD3G-CD3E heterodimer and one CD247 homodimer forming a stable octameric structure. CD3D-CD3E and CD3G-CD3E heterodimers preferentially associate with TR alpha and TR beta chains, respectively. The association of the CD247 homodimer is the last step of TcR assembly in the endoplasmic reticulum and is required for transport to the cell surface.

It localises to the cell membrane. Functionally, v region of the variable domain of T cell receptor (TR) beta chain that participates in the antigen recognition. Alpha-beta T cell receptors are antigen specific receptors which are essential to the immune response and are present on the cell surface of T lymphocytes. Recognize peptide-major histocompatibility (MH) (pMH) complexes that are displayed by antigen presenting cells (APC), a prerequisite for efficient T cell adaptive immunity against pathogens. Binding of alpha-beta TR to pMH complex initiates TR-CD3 clustering on the cell surface and intracellular activation of LCK that phosphorylates the ITAM motifs of CD3G, CD3D, CD3E and CD247 enabling the recruitment of ZAP70. In turn ZAP70 phosphorylates LAT, which recruits numerous signaling molecules to form the LAT signalosome. The LAT signalosome propagates signal branching to three major signaling pathways, the calcium, the mitogen-activated protein kinase (MAPK) kinase and the nuclear factor NF-kappa-B (NF-kB) pathways, leading to the mobilization of transcription factors that are critical for gene expression and essential for T cell growth and differentiation. The T cell repertoire is generated in the thymus, by V-(D)-J rearrangement. This repertoire is then shaped by intrathymic selection events to generate a peripheral T cell pool of self-MH restricted, non-autoaggressive T cells. Post-thymic interaction of alpha-beta TR with the pMH complexes shapes TR structural and functional avidity. This is T cell receptor beta variable 10-3 from Homo sapiens (Human).